The following is a 97-amino-acid chain: U-reduvitoxin-Pr11a (97 aa).

An N-terminal signal peptide occupies residues Met-1 to Met-20. Pacifastin domains lie at Arg-22–Arg-59 and Glu-62–Leu-97. Cystine bridges form between Cys-24-Cys-42, Cys-37-Cys-56, and Cys-40-Cys-51. The pro-Pro-Arg motif necessary for proteolytic processing stretch occupies residues Pro-57–Arg-59. 3 disulfides stabilise this stretch: Cys-65/Cys-82, Cys-77/Cys-96, and Cys-80/Cys-91.

It belongs to the protease inhibitor I19 family. In terms of tissue distribution, expressed by the venom gland.

It is found in the secreted. Inhibits trypsin activity and prophenoloxidase (PPO) activation, an enzyme essential for both clotting and insect innate immune responses. It does not inhibit activity of chymotrypsin and protease K, and has no effect on phenoloxidase (PO) activity. The sequence is that of U-reduvitoxin-Pr11a from Platymeris rhadamanthus (Red spot assassin bug).